The primary structure comprises 126 residues: MSWQTYVDTNLVGTGAVTQAAILGLDGNTWATSAGFAVTPAQGTTLAGAFNNADAIRAGGFDLAGVHYVTLRADDRSIYGKKGAAGVITVKTSKAILVGVYNEKIQPGTAANVVEKLADYLIGQGF.

The interval 2–36 (SWQTYVDTNLVGTGAVTQAAILGLDGNTWATSAGF) is actin binding. Lysine 104 carries the N6,N6,N6-trimethyllysine modification.

This sequence belongs to the profilin family. In terms of assembly, occurs in many kinds of cells as a complex with monomeric actin in a 1:1 ratio.

The protein localises to the cytoplasm. It is found in the cytoskeleton. In terms of biological role, binds to actin and affects the structure of the cytoskeleton. At high concentrations, profilin prevents the polymerization of actin, whereas it enhances it at low concentrations. By binding to PIP2, it inhibits the formation of IP3 and DG. This Acanthamoeba castellanii (Amoeba) protein is Profilin-1B.